Here is a 374-residue protein sequence, read N- to C-terminus: C-X-C chemokine receptor type 5 (374 aa).

Residues 1-57 (MNYPLTLDMGSITYNMDDLYKELAFYSNSTEIPLQDSNFCSTVEGPLLTSFKAVFMP) lie on the Extracellular side of the membrane. Asparagine 28 carries an N-linked (GlcNAc...) asparagine glycan. Residues 58 to 78 (VAYSLIFLLGMMGNILVLVIL) traverse the membrane as a helical segment. At 79 to 90 (ERHRHTRSSTET) the chain is on the cytoplasmic side. Residues 91-111 (FLFHLAVADLLLVFILPFAVA) form a helical membrane-spanning segment. The Extracellular segment spans residues 112-126 (EGSVGWVLGTFLCKT). A disulfide bridge connects residues cysteine 124 and cysteine 204. A helical membrane pass occupies residues 127 to 147 (VIALHKINFYCSSLLLACIAV). Residues 148 to 169 (DRYLAIVHAVHAYRRRRLLSIH) lie on the Cytoplasmic side of the membrane. Residues 170–190 (ITCTAIWLAGFLFALPELLFA) form a helical membrane-spanning segment. At 191-221 (KVGQPHNNDSLPQCTFSQENEAETRAWFTSR) the chain is on the extracellular side. A glycan (N-linked (GlcNAc...) asparagine) is linked at asparagine 198. The helical transmembrane segment at 222–242 (FLYHIGGFLLPMLVMGWCYVG) threads the bilayer. Over 243–261 (VVHRLLQAQRRPQRQKAVR) the chain is Cytoplasmic. The chain crosses the membrane as a helical span at residues 262–282 (VAILVTSIFFLCWSPYHIVIF). At 283–306 (LDTLERLKAVNSSCELSGYLSVAI) the chain is on the extracellular side. A helical transmembrane segment spans residues 307-327 (TLCEFLGLAHCCLNPMLYTFA). The Cytoplasmic portion of the chain corresponds to 328-374 (GVKFRSDLSRLLTKLGCAGPASLCQLFPNWRKSSLSESENATSLTTF).

The protein belongs to the G-protein coupled receptor 1 family. As to expression, mainly in spleen, in resting B-cells.

It localises to the cell membrane. Functionally, cytokine receptor that binds to B-lymphocyte chemoattractant (BLC). Involved in B-cell migration into B-cell follicles of spleen and Peyer patches but not into those of mesenteric or peripheral lymph nodes. The sequence is that of C-X-C chemokine receptor type 5 (Cxcr5) from Mus musculus (Mouse).